Reading from the N-terminus, the 402-residue chain is Multidrug resistance protein MdtH (402 aa).

Over 1–12 (MSRVSQARNLGK) the chain is Cytoplasmic. Residues 13-33 (YFLLIDNMLVVLGFFVVFPLI) traverse the membrane as a helical segment. Residues 34-98 (SIRFVDQMGW…GFATMGIAHE (65 aa)) lie on the Periplasmic side of the membrane. A helical transmembrane segment spans residues 99 to 116 (PWLLWFSCFLSGLGGTLF). Topologically, residues 117-138 (DPPRSALVVKLIRPEQRGRFFS) are cytoplasmic. The helical transmembrane segment at 139–159 (LLMMQDSAGAVIGALLGSWLL) threads the bilayer. Over 160-164 (QYDFR) the chain is Periplasmic. Residues 165-185 (LVCATGAILFILCALFNAWLL) traverse the membrane as a helical segment. The Cytoplasmic segment spans residues 186-213 (PAWKLSTVRTPVREGMRRVMSDKRFVTY). Residues 214–234 (VLTLAGYYMLAVQVMLMLPIM) traverse the membrane as a helical segment. At 235–243 (VNDIAGSPA) the chain is on the periplasmic side. A helical transmembrane segment spans residues 244-264 (AVKWMYAIEACLSLTLLYPIA). The Cytoplasmic segment spans residues 265-276 (RWSEKRFRLEHR). Residues 277–297 (LMAGLLVMSLSMLPIGMVGNL) traverse the membrane as a helical segment. Residues 298-299 (QQ) are Periplasmic-facing. Residues 300-320 (LFTLICAFYIGSVIAEPARET) traverse the membrane as a helical segment. The Cytoplasmic portion of the chain corresponds to 321–339 (LSASLADARARGSYMGFSR). Residues 340–360 (LGLAIGGAIGYIGGGWLFDMG) traverse the membrane as a helical segment. The Periplasmic segment spans residues 361–367 (KALAQPE). Residues 368-388 (LPWMMLGIIGFITFLALGWQF) traverse the membrane as a helical segment. The Cytoplasmic segment spans residues 389 to 402 (SHKRTPRRMLEPGA).

It belongs to the major facilitator superfamily. DHA1 family. MdtH (TC 2.A.1.2.21) subfamily.

The protein resides in the cell inner membrane. This chain is Multidrug resistance protein MdtH, found in Salmonella agona (strain SL483).